A 291-amino-acid chain; its full sequence is NAD kinase (291 aa).

Asp73 serves as the catalytic Proton acceptor. NAD(+) contacts are provided by residues 73 to 74, 147 to 148, Arg175, Asp177, and Gln246; these read DG and ND.

The protein belongs to the NAD kinase family. A divalent metal cation serves as cofactor.

It localises to the cytoplasm. It carries out the reaction NAD(+) + ATP = ADP + NADP(+) + H(+). Involved in the regulation of the intracellular balance of NAD and NADP, and is a key enzyme in the biosynthesis of NADP. Catalyzes specifically the phosphorylation on 2'-hydroxyl of the adenosine moiety of NAD to yield NADP. The sequence is that of NAD kinase from Chromobacterium violaceum (strain ATCC 12472 / DSM 30191 / JCM 1249 / CCUG 213 / NBRC 12614 / NCIMB 9131 / NCTC 9757 / MK).